Reading from the N-terminus, the 371-residue chain is 4-hydroxy-3-methylbut-2-en-1-yl diphosphate synthase (flavodoxin) (371 aa).

4 residues coordinate [4Fe-4S] cluster: cysteine 270, cysteine 273, cysteine 305, and glutamate 312.

The protein belongs to the IspG family. [4Fe-4S] cluster serves as cofactor.

The enzyme catalyses (2E)-4-hydroxy-3-methylbut-2-enyl diphosphate + oxidized [flavodoxin] + H2O + 2 H(+) = 2-C-methyl-D-erythritol 2,4-cyclic diphosphate + reduced [flavodoxin]. It participates in isoprenoid biosynthesis; isopentenyl diphosphate biosynthesis via DXP pathway; isopentenyl diphosphate from 1-deoxy-D-xylulose 5-phosphate: step 5/6. Its function is as follows. Converts 2C-methyl-D-erythritol 2,4-cyclodiphosphate (ME-2,4cPP) into 1-hydroxy-2-methyl-2-(E)-butenyl 4-diphosphate. This chain is 4-hydroxy-3-methylbut-2-en-1-yl diphosphate synthase (flavodoxin), found in Shewanella frigidimarina (strain NCIMB 400).